We begin with the raw amino-acid sequence, 680 residues long: DNA-directed RNA polymerase subunit beta' (680 aa).

Zn(2+) is bound by residues Cys69, Cys71, Cys87, and Cys90. Mg(2+) contacts are provided by Asp489, Asp491, and Asp493.

This sequence belongs to the RNA polymerase beta' chain family. RpoC1 subfamily. In plastids the minimal PEP RNA polymerase catalytic core is composed of four subunits: alpha, beta, beta', and beta''. When a (nuclear-encoded) sigma factor is associated with the core the holoenzyme is formed, which can initiate transcription. The cofactor is Mg(2+). It depends on Zn(2+) as a cofactor.

The protein resides in the plastid. Its subcellular location is the chloroplast. The enzyme catalyses RNA(n) + a ribonucleoside 5'-triphosphate = RNA(n+1) + diphosphate. DNA-dependent RNA polymerase catalyzes the transcription of DNA into RNA using the four ribonucleoside triphosphates as substrates. The polypeptide is DNA-directed RNA polymerase subunit beta' (Nandina domestica (Heavenly bamboo)).